The sequence spans 377 residues: Adaptive-response sensory kinase SasA (377 aa).

One can recognise a Histidine kinase domain in the interval 154–373; that stretch reads MLVHDLRSPL…SFHFTLPVYR (220 aa). His-157 carries the post-translational modification Phosphohistidine; by autocatalysis.

As to quaternary structure, homooligomerizes. Interacts with KaiC. Participates in the KaiABC clock complex, whose core is composed of a KaiC homohexamer, 6 KaiB and up to 6 KaiA dimers. SasA and KaiB(fs) compete to bind to KaiC.

The catalysed reaction is ATP + protein L-histidine = ADP + protein N-phospho-L-histidine.. Functionally, member of the two-component regulatory system SasA/RpaA involved in genome-wide circadian gene expression. One of several clock output pathways. Participates in the Kai clock protein complex, the main circadian regulator in cyanobacteria, via its interaction with KaiC. KaiC enhances the autophosphorylation activity of SasA, which then transfers its phosphate group to RpaA to activate it. In addition to its output function, recruits fold-shifted KaiB (KaiB(fs)) to KaiC to cooperatively form the KaiB(6):KaiC(6) complex (independent of SasA kinase activity). Required for robustness of the circadian rhythm of gene expression and is involved in clock output, also required for adaptation to light/dark cycles. The protein is Adaptive-response sensory kinase SasA of Synechococcus sp. (strain JA-3-3Ab) (Cyanobacteria bacterium Yellowstone A-Prime).